We begin with the raw amino-acid sequence, 469 residues long: Zinc finger CCCH domain-containing protein 30 (469 aa).

Residues 415–443 (VRPMKPCAYFNSPKGCRNGASCTFLHDAS) form a C3H1-type zinc finger. The tract at residues 444-469 (APTRKDHQKQKGSKRIKLDNTMGGRN) is disordered. Residues 449–458 (DHQKQKGSKR) show a composition bias toward basic residues.

This Oryza sativa subsp. japonica (Rice) protein is Zinc finger CCCH domain-containing protein 30.